The following is a 393-amino-acid chain: 8-amino-7-oxononanoate synthase (393 aa).

Residue 108–109 coordinates pyridoxal 5'-phosphate; the sequence is GF. Residue histidine 133 coordinates substrate. Residues serine 182, 207–210, and 238–241 contribute to the pyridoxal 5'-phosphate site; these read DDAH and TLSK. Lysine 241 bears the N6-(pyridoxal phosphate)lysine mark. Residue threonine 355 participates in substrate binding.

It belongs to the class-II pyridoxal-phosphate-dependent aminotransferase family. BioF subfamily. As to quaternary structure, homodimer. Pyridoxal 5'-phosphate is required as a cofactor.

The catalysed reaction is 6-carboxyhexanoyl-[ACP] + L-alanine + H(+) = (8S)-8-amino-7-oxononanoate + holo-[ACP] + CO2. It participates in cofactor biosynthesis; biotin biosynthesis. In terms of biological role, catalyzes the decarboxylative condensation of pimeloyl-[acyl-carrier protein] and L-alanine to produce 8-amino-7-oxononanoate (AON), [acyl-carrier protein], and carbon dioxide. The polypeptide is 8-amino-7-oxononanoate synthase (Petrotoga mobilis (strain DSM 10674 / SJ95)).